The primary structure comprises 199 residues: dITP/XTP pyrophosphatase (199 aa).

Position 7–12 (7–12 (SANKGK)) interacts with substrate. The Mg(2+) site is built by aspartate 38 and aspartate 73. Catalysis depends on aspartate 73, which acts as the Proton acceptor. Residues serine 74, 155-158 (FGYD), lysine 178, and 183-184 (HR) each bind substrate.

This sequence belongs to the HAM1 NTPase family. As to quaternary structure, homodimer. Requires Mg(2+) as cofactor.

It catalyses the reaction XTP + H2O = XMP + diphosphate + H(+). The enzyme catalyses dITP + H2O = dIMP + diphosphate + H(+). It carries out the reaction ITP + H2O = IMP + diphosphate + H(+). Its function is as follows. Pyrophosphatase that catalyzes the hydrolysis of nucleoside triphosphates to their monophosphate derivatives, with a high preference for the non-canonical purine nucleotides XTP (xanthosine triphosphate), dITP (deoxyinosine triphosphate) and ITP. Seems to function as a house-cleaning enzyme that removes non-canonical purine nucleotides from the nucleotide pool, thus preventing their incorporation into DNA/RNA and avoiding chromosomal lesions. This is dITP/XTP pyrophosphatase from Aliarcobacter butzleri (strain RM4018) (Arcobacter butzleri).